Reading from the N-terminus, the 185-residue chain is uncharacterized protein (185 aa).

The N-terminal stretch at 1–29 (MKNQEIIEVKSKMFLRIWAFVGSAGMGLA) is a signal peptide. Cysteine 30 carries N-palmitoyl cysteine lipidation. Cysteine 30 carries S-diacylglycerol cysteine lipidation. The helical transmembrane segment at 45–67 (YLLAIPAGFLFTLFCLYLFIIFF) threads the bilayer.

To B.subtilis YfjE.

It localises to the cell membrane. This is an uncharacterized protein from Bacillus subtilis (strain 168).